The primary structure comprises 70 residues: DNA-directed RNA polymerase subunit omega (70 aa).

Belongs to the RNA polymerase subunit omega family. As to quaternary structure, the RNAP catalytic core consists of 2 alpha, 1 beta, 1 beta' and 1 omega subunit. When a sigma factor is associated with the core the holoenzyme is formed, which can initiate transcription.

The enzyme catalyses RNA(n) + a ribonucleoside 5'-triphosphate = RNA(n+1) + diphosphate. Promotes RNA polymerase assembly. Latches the N- and C-terminal regions of the beta' subunit thereby facilitating its interaction with the beta and alpha subunits. The protein is DNA-directed RNA polymerase subunit omega of Clostridium perfringens (strain ATCC 13124 / DSM 756 / JCM 1290 / NCIMB 6125 / NCTC 8237 / Type A).